Reading from the N-terminus, the 334-residue chain is GTPase Obg (334 aa).

Positions 1 to 159 constitute an Obg domain; the sequence is MRFVDEVVIK…KEVRLELNLL (159 aa). The OBG-type G domain maps to 160–331; it reads ADVALLGLPN…LAKKLNEFLQ (172 aa). GTP contacts are provided by residues 166–173, 191–195, 212–215, 282–285, and 312–314; these read GLPNAGKS, FTTMY, DIPG, NKID, and SAA. 2 residues coordinate Mg(2+): S173 and T193.

This sequence belongs to the TRAFAC class OBG-HflX-like GTPase superfamily. OBG GTPase family. As to quaternary structure, monomer. Mg(2+) serves as cofactor.

It localises to the cytoplasm. In terms of biological role, an essential GTPase which binds GTP, GDP and possibly (p)ppGpp with moderate affinity, with high nucleotide exchange rates and a fairly low GTP hydrolysis rate. Plays a role in control of the cell cycle, stress response, ribosome biogenesis and in those bacteria that undergo differentiation, in morphogenesis control. The chain is GTPase Obg from Francisella tularensis subsp. mediasiatica (strain FSC147).